Consider the following 458-residue polypeptide: Transcription termination factor Rho (458 aa).

Residues 1–23 are disordered; the sequence is MNTTNKESTAELNNTESNNNYNN. A compositionally biased stretch (low complexity) spans 10-23; sequence AELNNTESNNNYNN. The region spanning 78–153 is the Rho RNA-BD domain; that stretch reads LIVGEGVLEV…LKVNRVNFED (76 aa). Residues 201 to 206, 213 to 218, and arginine 244 contribute to the ATP site; these read GKGQRA and RTGKTV.

Belongs to the Rho family. In terms of assembly, homohexamer. The homohexamer assembles into an open ring structure.

In terms of biological role, facilitates transcription termination by a mechanism that involves Rho binding to the nascent RNA, activation of Rho's RNA-dependent ATPase activity, and release of the mRNA from the DNA template. In Rickettsia conorii (strain ATCC VR-613 / Malish 7), this protein is Transcription termination factor Rho.